The chain runs to 377 residues: RIB43A-like with coiled-coils protein 2 (377 aa).

Residues 217–246 are a coiled coil; it reads NKNQVVELTERKRQEKQQEQEDNMTEITNL. The segment at 354-377 is disordered; sequence KQMNTASSSQPTEDYFSQFNTRSR.

This sequence belongs to the RIB43A family. As to quaternary structure, microtubule inner protein component of sperm flagellar doublet microtubules.

It is found in the cytoplasm. Its subcellular location is the cytoskeleton. The protein resides in the cilium axoneme. It localises to the flagellum axoneme. In terms of biological role, microtubule inner protein (MIP) part of the dynein-decorated doublet microtubules (DMTs) in cilia axoneme, which is required for motile cilia beating. This is RIB43A-like with coiled-coils protein 2 from Mus musculus (Mouse).